The chain runs to 348 residues: L-threonine 3-dehydrogenase (348 aa).

Zn(2+) is bound at residue Cys-38. Catalysis depends on charge relay system residues Thr-40 and His-43. Zn(2+)-binding residues include His-63, Glu-64, Cys-93, Cys-96, Cys-99, and Cys-107. Residues Ile-175, Asp-195, Arg-200, 263–265 (LGI), and 287–288 (IY) contribute to the NAD(+) site.

The protein belongs to the zinc-containing alcohol dehydrogenase family. Homotetramer. The cofactor is Zn(2+).

It localises to the cytoplasm. It carries out the reaction L-threonine + NAD(+) = (2S)-2-amino-3-oxobutanoate + NADH + H(+). Its pathway is amino-acid degradation; L-threonine degradation via oxydo-reductase pathway; glycine from L-threonine: step 1/2. Catalyzes the NAD(+)-dependent oxidation of L-threonine to 2-amino-3-ketobutyrate. This is L-threonine 3-dehydrogenase from Deinococcus radiodurans (strain ATCC 13939 / DSM 20539 / JCM 16871 / CCUG 27074 / LMG 4051 / NBRC 15346 / NCIMB 9279 / VKM B-1422 / R1).